The primary structure comprises 313 residues: Thymidylate synthase (313 aa).

Residues M1 to H28 are disordered. The span at Q18–H28 shows a compositional bias: basic and acidic residues. R50 contributes to the dUMP binding site. S114 is subject to Phosphoserine. Residues R175–R176, C195–H196, R215–D218, N226, and H256–Y258 each bind dUMP. C195 functions as the Nucleophile in the catalytic mechanism. D218 is a binding site for (6R)-5,10-methylene-5,6,7,8-tetrahydrofolate. Glycyl lysine isopeptide (Lys-Gly) (interchain with G-Cter in SUMO2) cross-links involve residues K287, K292, and K308. A312 provides a ligand contact to (6R)-5,10-methylene-5,6,7,8-tetrahydrofolate.

The protein belongs to the thymidylate synthase family. Homodimer.

Its subcellular location is the nucleus. The protein localises to the cytoplasm. The protein resides in the mitochondrion. It localises to the mitochondrion matrix. It is found in the mitochondrion inner membrane. It carries out the reaction dUMP + (6R)-5,10-methylene-5,6,7,8-tetrahydrofolate = 7,8-dihydrofolate + dTMP. The protein operates within pyrimidine metabolism; dTTP biosynthesis. Catalyzes the reductive methylation of 2'-deoxyuridine 5'-monophosphate (dUMP) to thymidine 5'-monophosphate (dTMP), using the cosubstrate, 5,10- methylenetetrahydrofolate (CH2H4folate) as a 1-carbon donor and reductant and contributes to the de novo mitochondrial thymidylate biosynthesis pathway. The sequence is that of Thymidylate synthase from Homo sapiens (Human).